Here is a 551-residue protein sequence, read N- to C-terminus: Cytochrome P450 monooxygenase FCK2 (551 aa).

The next 3 membrane-spanning stretches (helical) occupy residues 8–28 (FDPA…VFIF), 35–55 (LHVF…VYIV), and 69–89 (VTTI…ISIL). N-linked (GlcNAc...) asparagine glycosylation is present at asparagine 258. Cysteine 493 contacts heme.

The protein belongs to the cytochrome P450 family. Requires heme as cofactor.

It is found in the membrane. It functions in the pathway secondary metabolite biosynthesis. Cytochrome P450 monooxygenase; part of the gene cluster that mediates the biosynthesis of cytokinins such as fusatin, fusatinic acids or 8-oxofusatin, known for their growth promoting and anti-senescence activities toward host plants. FCK1 is a bifunctional enzyme that performs the first steps in the biosynthesis of Fusarium cytokinins. It first condenses adenosine monophosphate (AMP) with dimethylallyl diphosphate (DMAPP) to yield isoprenyl adenosine monophosphate. It then catalyzes the removal of the phosphoribose to produce isopentenylaldehyde. The cytochrome P450 monooxygenase then converts isopentenylaldehyde to trans-zeatin. A condensation step converts trans-zeatin to fusatin which is further modified to produce fusatinic acid. The mechanism for oxidation of fusatin to fusatinic acid remains unknown. 8-oxofusatin could be produced through several pathways, via direct oxygenation of fusatin, or via the 8-oxo-pentenyladenine intermediate which itself must arise from either the prenylation of 8-oxo-AMP by FCK1 and/or oxygenation of isopentenylaldehyde. Both the FCK3 and FCK4 enzymes act downstream of the identified cytokinins to produce yet unidentified compounds. This chain is Cytochrome P450 monooxygenase FCK2, found in Fusarium pseudograminearum (strain CS3096) (Wheat and barley crown-rot fungus).